The chain runs to 375 residues: Peritrophin-48 (375 aa).

The signal sequence occupies residues 1 to 20 (MIIKTLLASVAIMLIATVNA). Chitin-binding type-2 domains are found at residues 25 to 83 (AKYC…NCIL), 86 to 143 (DNPC…SDDD), 153 to 210 (LNIC…MCER), 224 to 292 (ETLC…GCNR), and 294 to 360 (EYTT…ACQN). A disulfide bridge connects residues cysteine 60 and cysteine 73. An N-linked (GlcNAc...) asparagine glycan is attached at asparagine 117. Intrachain disulfides connect cysteine 120–cysteine 133, cysteine 187–cysteine 200, cysteine 265–cysteine 278, and cysteine 330–cysteine 343. N-linked (GlcNAc...) asparagine glycosylation occurs at asparagine 360.

Glycosylated. As to expression, cardia and midgut peritrophic membrane.

Its function is as follows. May bind chitin or related oligosaccharide structures. In Lucilia cuprina (Green bottle fly), this protein is Peritrophin-48.